A 511-amino-acid chain; its full sequence is Zinc finger CCCH-type with G patch domain-containing protein (511 aa).

The C3H1-type zinc finger occupies Pro-157 to Leu-180. A disordered region spans residues Asp-254–Asp-281. Residues Ser-271–Asp-281 show a composition bias toward acidic residues. A G-patch domain is found at Thr-311–Glu-357. Disordered stretches follow at residues Gly-409–Thr-433 and Met-478–Phe-511. Basic and acidic residues predominate over residues Gln-414–Ala-425. Over residues Met-478–Arg-493 the composition is skewed to polar residues. Residues Ser-494–Phe-511 are compositionally biased toward basic and acidic residues.

The protein localises to the nucleus. Functionally, transcription repressor. This chain is Zinc finger CCCH-type with G patch domain-containing protein, found in Drosophila ananassae (Fruit fly).